A 447-amino-acid chain; its full sequence is MCKPQQKHYGRQVMNTQNSLKQVATATMVGTAIEYFDNYIYAMAAVLVFNHQFFHAVDPLSGQIAALSTLALTFIARPLGAILFGHFGDRFGRKNTFVMSLLLMGISTVVIGLLPTYDSIGIWATILLCLCRIGQGIGLGGEWGGAALVAVENAPEGKRGWYGTFPQLGAPLGLLLANGVFLGITAIFGQEAMTEWAWRIPFLSSVILVAIGLYVRLKLTEAPIFLAALNKPKPKRLPMLEVVTTHFKPFFLGMLVCIAGYVLFYIMIAFSQIYAKSAPTVSEAGYAMGLGFSPQIFTALLMASAVSLAITIAASGKYIDKIGRRTWLIWTTVGVAIFGLSLPLFLENGTTTSLFWFLFIGMGLIGMGYGPLASFLPELFPTHARYSGASLTYNIAGLFGASVAAIIALPLNAHYGLKGVGIYLTLNAVLSLVGLWFISETKDKLLS.

Residues 1–28 (MCKPQQKHYGRQVMNTQNSLKQVATATM) lie on the Cytoplasmic side of the membrane. A helical transmembrane segment spans residues 29–49 (VGTAIEYFDNYIYAMAAVLVF). Topologically, residues 50–63 (NHQFFHAVDPLSGQ) are periplasmic. A helical membrane pass occupies residues 64–84 (IAALSTLALTFIARPLGAILF). Topologically, residues 85-96 (GHFGDRFGRKNT) are cytoplasmic. Residues 97–117 (FVMSLLLMGISTVVIGLLPTY) form a helical membrane-spanning segment. The Periplasmic segment spans residues 118–119 (DS). Residues 120–140 (IGIWATILLCLCRIGQGIGLG) traverse the membrane as a helical segment. At 141 to 167 (GEWGGAALVAVENAPEGKRGWYGTFPQ) the chain is on the cytoplasmic side. The chain crosses the membrane as a helical span at residues 168-188 (LGAPLGLLLANGVFLGITAIF). The Periplasmic segment spans residues 189–194 (GQEAMT). Residues 195–215 (EWAWRIPFLSSVILVAIGLYV) traverse the membrane as a helical segment. Over 216–249 (RLKLTEAPIFLAALNKPKPKRLPMLEVVTTHFKP) the chain is Cytoplasmic. The chain crosses the membrane as a helical span at residues 250–270 (FFLGMLVCIAGYVLFYIMIAF). The Periplasmic portion of the chain corresponds to 271–295 (SQIYAKSAPTVSEAGYAMGLGFSPQ). The helical transmembrane segment at 296–316 (IFTALLMASAVSLAITIAASG) threads the bilayer. Residues 317–325 (KYIDKIGRR) lie on the Cytoplasmic side of the membrane. Residues 326 to 346 (TWLIWTTVGVAIFGLSLPLFL) form a helical membrane-spanning segment. Residues 347 to 354 (ENGTTTSL) are Periplasmic-facing. A helical transmembrane segment spans residues 355–375 (FWFLFIGMGLIGMGYGPLASF). Residues 376-390 (LPELFPTHARYSGAS) lie on the Cytoplasmic side of the membrane. The helical transmembrane segment at 391 to 411 (LTYNIAGLFGASVAAIIALPL) threads the bilayer. Over 412–418 (NAHYGLK) the chain is Periplasmic. A helical transmembrane segment spans residues 419 to 439 (GVGIYLTLNAVLSLVGLWFIS). At 440 to 447 (ETKDKLLS) the chain is on the cytoplasmic side.

This sequence belongs to the major facilitator superfamily. Metabolite:H+ Symporter (MHS) family (TC 2.A.1.6) family.

It localises to the cell inner membrane. The protein is Putative metabolite transport protein HI_0418 of Haemophilus influenzae (strain ATCC 51907 / DSM 11121 / KW20 / Rd).